Here is a 372-residue protein sequence, read N- to C-terminus: Serine/threonine-protein kinase 17B (372 aa).

The Protein kinase domain occupies 33-293; that stretch reads ILTSKELGRG…AEICLSHSWL (261 aa). ATP is bound by residues 39-47 and K62; that span reads LGRGKFAVV. Residue D158 is the Proton acceptor of the active site. The tract at residues 305–362 is disordered; the sequence is EETSSSSQTQDHSVRSSEDKTSKSSCNGTCGDREDKENIPEDSSMVSKRFRFDDSLPN. Positions 316-326 are enriched in basic and acidic residues; it reads HSVRSSEDKTS.

This sequence belongs to the protein kinase superfamily. CAMK Ser/Thr protein kinase family. DAP kinase subfamily. Interacts with CHP1; the interaction induces CHP1 to translocate from the Golgi to the nucleus. In terms of processing, autophosphorylated. In terms of tissue distribution, highly expressed in placenta, lung, pancreas. Lower levels in heart, brain, liver, skeletal muscle and kidney.

The protein resides in the nucleus. The protein localises to the cell membrane. Its subcellular location is the endoplasmic reticulum-Golgi intermediate compartment. It carries out the reaction L-seryl-[protein] + ATP = O-phospho-L-seryl-[protein] + ADP + H(+). The catalysed reaction is L-threonyl-[protein] + ATP = O-phospho-L-threonyl-[protein] + ADP + H(+). In terms of biological role, phosphorylates myosin light chains. Acts as a positive regulator of apoptosis. In Homo sapiens (Human), this protein is Serine/threonine-protein kinase 17B (STK17B).